A 391-amino-acid polypeptide reads, in one-letter code: MHTTYLKNLIGFESLTPQSNGAIEYIDDLLKEHGFKTEVKIFGETEQVTNLYAVYGNSKPNICFVGHVDVVPAGDPNLWHNSNPFKAHEQEGKIYGRGTVDMKGSIACFLAASLDFIKNNTDFVGSISFLLTSDEEGKAKHGTKEMLQYIYNQGHEIDFAIVGEPTCEKEIGDTIKIGRRGSINFKLAVKGLGGHVAYPQKANNPLPCLIRILNELTNIKLDKGTEFFQNSNLEVTNIDVDNNTTNVIPETATVHFNIRFNNLHSAETLAKQVEEIIKQHCQKHKLDYTLEYNSSADSFIQNPNDKIKEFATIVEKTLNIKPNFSTSGGTSDARFVKNYCPLVEFGLLSDTAHKINEYTKISDLQKLYDVYYNFLMETLNVTGSPPLLGMT.

H67 is a binding site for Zn(2+). Residue D69 is part of the active site. D101 provides a ligand contact to Zn(2+). E135 acts as the Proton acceptor in catalysis. Residues E136, E164, and H353 each coordinate Zn(2+).

The protein belongs to the peptidase M20A family. DapE subfamily. Homodimer. The cofactor is Zn(2+). Co(2+) serves as cofactor.

It carries out the reaction N-succinyl-(2S,6S)-2,6-diaminopimelate + H2O = (2S,6S)-2,6-diaminopimelate + succinate. The protein operates within amino-acid biosynthesis; L-lysine biosynthesis via DAP pathway; LL-2,6-diaminopimelate from (S)-tetrahydrodipicolinate (succinylase route): step 3/3. Its function is as follows. Catalyzes the hydrolysis of N-succinyl-L,L-diaminopimelic acid (SDAP), forming succinate and LL-2,6-diaminopimelate (DAP), an intermediate involved in the bacterial biosynthesis of lysine and meso-diaminopimelic acid, an essential component of bacterial cell walls. The chain is Succinyl-diaminopimelate desuccinylase from Rickettsia bellii (strain OSU 85-389).